The chain runs to 261 residues: tRNA pseudouridine synthase A (261 aa).

Asp51 serves as the catalytic Nucleophile. Tyr109 contacts substrate.

It belongs to the tRNA pseudouridine synthase TruA family. In terms of assembly, homodimer.

The catalysed reaction is uridine(38/39/40) in tRNA = pseudouridine(38/39/40) in tRNA. Formation of pseudouridine at positions 38, 39 and 40 in the anticodon stem and loop of transfer RNAs. The sequence is that of tRNA pseudouridine synthase A from Shewanella loihica (strain ATCC BAA-1088 / PV-4).